We begin with the raw amino-acid sequence, 559 residues long: (R)-mandelonitrile lyase 1 (559 aa).

A signal peptide spans 1–27 (MEKSTMSVILFVLHLLVLHLQYSEVHS). N-linked (GlcNAc...) asparagine glycosylation is found at Asn-30 and Asn-44. Residues 63–64 (TS), 82–83 (ER), Thr-133, and 137–140 (NAGV) each bind FAD. N-linked (GlcNAc...) asparagine glycosylation is found at Asn-145, Asn-162, Asn-178, and Asn-218. Residue Val-244 participates in FAD binding. N-linked (GlcNAc...) asparagine glycosylation is found at Asn-252, Asn-255, Asn-309, Asn-380, Asn-402, Asn-420, and Asn-467. The cysteines at positions 427 and 478 are disulfide-linked. Tyr-485 lines the substrate pocket. 486 to 487 (WH) lines the FAD pocket. His-487 serves as the catalytic Proton donor. His-525 functions as the Proton acceptor in the catalytic mechanism. 526–527 (PQ) is an FAD binding site.

This sequence belongs to the GMC oxidoreductase family. In terms of assembly, monomer. It depends on FAD as a cofactor.

The catalysed reaction is (R)-mandelonitrile = benzaldehyde + hydrogen cyanide. Functionally, involved in cyanogenesis, the release of HCN from injured tissues. Catalyzes the stereospecific addition of HCN to a variety of aldehydes in vitro. It is a major seed constituent, and could have the additional role of a storage form for reduced nitrogen. This Prunus dulcis (Almond) protein is (R)-mandelonitrile lyase 1 (MDL1).